Here is a 20-residue protein sequence, read N- to C-terminus: Alkaline phosphatase (20 aa).

The tract at residues 1-20 (TDMLAVSVSSTDAIGHKYGT) is disordered.

Homodimer; may be disulfide-linked. The N-terminus is blocked.

It catalyses the reaction a phosphate monoester + H2O = an alcohol + phosphate. With respect to regulation, completely inhibited by thiol-reducing agents, such as DTT and 2-mercaptoethanol. Activity was also inhibited by sodium orthovanadate, sodium molybdate, N-ethylmaleimide, EDTA and zinc ion, but was not inhibited by okadaic acid. Acts against tyrosine-phosphatases. The protein is Alkaline phosphatase of Prevotella intermedia.